The primary structure comprises 275 residues: uncharacterized protein (275 aa).

The protein belongs to the MtfA family.

This is an uncharacterized protein from Synechocystis sp. (strain ATCC 27184 / PCC 6803 / Kazusa).